A 551-amino-acid chain; its full sequence is Hydroxymethylpyrimidine/phosphomethylpyrimidine kinase THI20 (551 aa).

Gln-64 contributes to the 4-amino-5-hydroxymethyl-2-methylpyrimidine binding site. Cys-468 serves as the catalytic Nucleophile. Glu-540 serves as the catalytic Proton donor.

It in the N-terminal section; belongs to the ThiD family. In the C-terminal section; belongs to the thiaminase-2 family.

The catalysed reaction is 4-amino-5-hydroxymethyl-2-methylpyrimidine + ATP = 4-amino-2-methyl-5-(phosphooxymethyl)pyrimidine + ADP + H(+). It carries out the reaction 4-amino-2-methyl-5-(phosphooxymethyl)pyrimidine + ATP = 4-amino-2-methyl-5-(diphosphooxymethyl)pyrimidine + ADP. It catalyses the reaction thiamine + H2O = 5-(2-hydroxyethyl)-4-methylthiazole + 4-amino-5-hydroxymethyl-2-methylpyrimidine + H(+). Its pathway is cofactor biosynthesis; thiamine diphosphate biosynthesis; 4-amino-2-methyl-5-diphosphomethylpyrimidine from 5-amino-1-(5-phospho-D-ribosyl)imidazole: step 2/3. It participates in cofactor biosynthesis; thiamine diphosphate biosynthesis; 4-amino-2-methyl-5-diphosphomethylpyrimidine from 5-amino-1-(5-phospho-D-ribosyl)imidazole: step 3/3. Its function is as follows. Trifunctional protein with both thiamine biosynthetic and degradative activity. Within the thiamine biosynthesis pathway, catalyzes the phosphorylation of hydroxymethylpyrimidine (HMP) to hydroxymethylpyrimidine phosphate (HMP-P), as well as of HMP-P to HMP-PP. Also has thiaminase II activity and degrades thiamine using water as the nucleophile, resulting only in the formation of HMP (4-amino-2-methyl-5-hydroxymethylpyrimidine) and Thz (4-methyl-5-thiazole ethanol). This Saccharomyces cerevisiae (strain ATCC 204508 / S288c) (Baker's yeast) protein is Hydroxymethylpyrimidine/phosphomethylpyrimidine kinase THI20.